The following is a 393-amino-acid chain: Squamosa promoter-binding-like protein 11 (393 aa).

The interval 74 to 96 is disordered; sequence QSTSINSSSPEAKRCKLASESSP. The segment at 172–249 adopts an SBP-type zinc-finger fold; that stretch reads VPRCQIDGCE…SHHNARRRKP (78 aa). The Zn(2+) site is built by Cys175, Cys180, Cys197, His200, Cys216, Cys219, His223, and Cys235. A Bipartite nuclear localization signal motif is present at residues 232–248; that stretch reads KRSCRKRLSHHNARRRK.

It depends on Zn(2+) as a cofactor.

It is found in the nucleus. In terms of biological role, trans-acting factor that binds specifically to the consensus nucleotide sequence 5'-TNCGTACAA-3'. This is Squamosa promoter-binding-like protein 11 (SPL11) from Arabidopsis thaliana (Mouse-ear cress).